Reading from the N-terminus, the 165-residue chain is Small ribosomal subunit protein uS5 (165 aa).

The region spanning 10-73 (LKEKVVHINR…EDAKKNIVEV (64 aa)) is the S5 DRBM domain.

The protein belongs to the universal ribosomal protein uS5 family. As to quaternary structure, part of the 30S ribosomal subunit. Contacts proteins S4 and S8.

With S4 and S12 plays an important role in translational accuracy. In terms of biological role, located at the back of the 30S subunit body where it stabilizes the conformation of the head with respect to the body. This chain is Small ribosomal subunit protein uS5, found in Clostridium botulinum (strain ATCC 19397 / Type A).